The chain runs to 133 residues: Small ribosomal subunit protein uS8 (133 aa).

Belongs to the universal ribosomal protein uS8 family. Part of the 30S ribosomal subunit.

Its function is as follows. One of the primary rRNA binding proteins, it binds directly to 16S rRNA central domain where it helps coordinate assembly of the platform of the 30S subunit. This chain is Small ribosomal subunit protein uS8, found in Saccharolobus solfataricus (strain ATCC 35092 / DSM 1617 / JCM 11322 / P2) (Sulfolobus solfataricus).